A 246-amino-acid polypeptide reads, in one-letter code: 1-(5-phosphoribosyl)-5-[(5-phosphoribosylamino)methylideneamino] imidazole-4-carboxamide isomerase (246 aa).

The active-site Proton acceptor is the Asp8. Asp131 acts as the Proton donor in catalysis.

It belongs to the HisA/HisF family.

The protein localises to the cytoplasm. The catalysed reaction is 1-(5-phospho-beta-D-ribosyl)-5-[(5-phospho-beta-D-ribosylamino)methylideneamino]imidazole-4-carboxamide = 5-[(5-phospho-1-deoxy-D-ribulos-1-ylimino)methylamino]-1-(5-phospho-beta-D-ribosyl)imidazole-4-carboxamide. It participates in amino-acid biosynthesis; L-histidine biosynthesis; L-histidine from 5-phospho-alpha-D-ribose 1-diphosphate: step 4/9. This chain is 1-(5-phosphoribosyl)-5-[(5-phosphoribosylamino)methylideneamino] imidazole-4-carboxamide isomerase, found in Bordetella bronchiseptica (strain ATCC BAA-588 / NCTC 13252 / RB50) (Alcaligenes bronchisepticus).